The following is a 423-amino-acid chain: Serine--tRNA ligase (423 aa).

L-serine is bound at residue 229 to 231 (TAE). Residue 260-262 (RRE) participates in ATP binding. Glu283 is a binding site for L-serine. An ATP-binding site is contributed by 347–350 (EISS). Ser383 provides a ligand contact to L-serine.

Belongs to the class-II aminoacyl-tRNA synthetase family. Type-1 seryl-tRNA synthetase subfamily. Homodimer. The tRNA molecule binds across the dimer.

The protein resides in the cytoplasm. It catalyses the reaction tRNA(Ser) + L-serine + ATP = L-seryl-tRNA(Ser) + AMP + diphosphate + H(+). The catalysed reaction is tRNA(Sec) + L-serine + ATP = L-seryl-tRNA(Sec) + AMP + diphosphate + H(+). It participates in aminoacyl-tRNA biosynthesis; selenocysteinyl-tRNA(Sec) biosynthesis; L-seryl-tRNA(Sec) from L-serine and tRNA(Sec): step 1/1. Catalyzes the attachment of serine to tRNA(Ser). Is also able to aminoacylate tRNA(Sec) with serine, to form the misacylated tRNA L-seryl-tRNA(Sec), which will be further converted into selenocysteinyl-tRNA(Sec). The polypeptide is Serine--tRNA ligase (Trichlorobacter lovleyi (strain ATCC BAA-1151 / DSM 17278 / SZ) (Geobacter lovleyi)).